The sequence spans 276 residues: ARL14 effector protein (276 aa).

The segment at 158-177 (KQTEFAPEGGKREKRKLTKA) is disordered. Lysine 176 participates in a covalent cross-link: Glycyl lysine isopeptide (Lys-Gly) (interchain with G-Cter in SUMO2). A phosphoserine mark is found at serine 182 and serine 266.

As to quaternary structure, interacts with ARL14 and MYO1E.

Its subcellular location is the cytoplasm. Through its interaction with ARL14 and MYO1E, may connect MHC class II-containing cytoplasmic vesicles to the actin network and hence controls the movement of these vesicles along the actin cytoskeleton in dendritic cells. The sequence is that of ARL14 effector protein (Arl14ep) from Mus musculus (Mouse).